A 293-amino-acid polypeptide reads, in one-letter code: Protease HtpX (293 aa).

Transmembrane regions (helical) follow at residues 4 to 24 (IALF…VLSL) and 34 to 54 (GLLI…LLMS). Residue histidine 139 coordinates Zn(2+). Glutamate 140 is an active-site residue. Histidine 143 contributes to the Zn(2+) binding site. 2 helical membrane passes run 158 to 178 (VVNT…AGFL) and 193 to 213 (LIYF…ASII). Glutamate 222 contributes to the Zn(2+) binding site.

The protein belongs to the peptidase M48B family. The cofactor is Zn(2+).

The protein resides in the cell inner membrane. The chain is Protease HtpX from Salmonella agona (strain SL483).